Consider the following 972-residue polypeptide: Aminopeptidase N (972 aa).

The Cytoplasmic portion of the chain corresponds to 2–17 (TSQGRTRTLLNLTPIR). A helical; Signal-anchor for type II membrane protein membrane pass occupies residues 18-39 (LIVALFLVAAAVGLSIGLTYYF). Topologically, residues 40 to 972 (TRKAFDTSEK…LAAFFKKATL (933 aa)) are extracellular. A compositionally biased stretch (basic and acidic residues) spans 47–62 (SEKPGKDDTGGKDKDN). Residues 47–66 (SEKPGKDDTGGKDKDNSPSA) are disordered. An N-linked (GlcNAc...) asparagine glycan is attached at Asn99. Glu208 serves as a coordination point for substrate. Asn227 is a glycosylation site (N-linked (GlcNAc...) asparagine). 343 to 347 (GAMEN) is a binding site for substrate. Residue His379 coordinates Zn(2+). Residue Glu380 is the Proton acceptor of the active site. Residues His383 and Glu402 each contribute to the Zn(2+) site. Asn549 carries N-linked (GlcNAc...) asparagine glycosylation. 2 disulfides stabilise this stretch: Cys759/Cys766 and Cys804/Cys840. The N-linked (GlcNAc...) asparagine glycan is linked to Asn858.

This sequence belongs to the peptidase M1 family. Zn(2+) is required as a cofactor.

The protein localises to the membrane. The enzyme catalyses Release of an N-terminal amino acid, Xaa-|-Yaa- from a peptide, amide or arylamide. Xaa is preferably Ala, but may be most amino acids including Pro (slow action). When a terminal hydrophobic residue is followed by a prolyl residue, the two may be released as an intact Xaa-Pro dipeptide.. This Haemonchus contortus (Barber pole worm) protein is Aminopeptidase N.